We begin with the raw amino-acid sequence, 557 residues long: NADH-quinone oxidoreductase subunit C/D (557 aa).

A compositionally biased stretch (acidic residues) spans 1 to 13 (MSLEEQQSDDPAE). Positions 1–20 (MSLEEQQSDDPAELESGVSR) are disordered. Residues 1 to 174 (MSLEEQQSDD…ATLREHANPL (174 aa)) form an NADH dehydrogenase I subunit C region. The segment at 184 to 557 (NTMYINIGPH…LDIVLGEVDR (374 aa)) is NADH dehydrogenase I subunit D. A Glycyl lysine isopeptide (Lys-Gly) (interchain with G-Cter in SAMP2) cross-link involves residue K517.

In the N-terminal section; belongs to the complex I 30 kDa subunit family. It in the C-terminal section; belongs to the complex I 49 kDa subunit family. As to quaternary structure, NDH-1 is composed of 13 different subunits. Subunits NuoB, CD, E, F, and G constitute the peripheral sector of the complex.

Its subcellular location is the cell membrane. It catalyses the reaction a quinone + NADH + 5 H(+)(in) = a quinol + NAD(+) + 4 H(+)(out). In terms of biological role, NDH-1 shuttles electrons from NADH, via FMN and iron-sulfur (Fe-S) centers, to quinones in the respiratory chain. Couples the redox reaction to proton translocation (for every two electrons transferred, four hydrogen ions are translocated across the cytoplasmic membrane), and thus conserves the redox energy in a proton gradient. The chain is NADH-quinone oxidoreductase subunit C/D (nuoCD) from Haloferax volcanii (strain ATCC 29605 / DSM 3757 / JCM 8879 / NBRC 14742 / NCIMB 2012 / VKM B-1768 / DS2) (Halobacterium volcanii).